Here is a 565-residue protein sequence, read N- to C-terminus: Bifunctional dihydrofolate reductase-thymidylate synthase 2 (565 aa).

One can recognise a DHFR domain in the interval Thr65–Arg242. Val69 serves as a coordination point for substrate. Residues Ala71 and Gly77–Lys83 contribute to the NADP(+) site. Asp91 contacts substrate. NADP(+)-binding positions include Arg115 to Thr117 and Leu136 to Ser139. Ile178 serves as a coordination point for substrate. Gly179 to Glu186 provides a ligand contact to NADP(+). Substrate is bound at residue Thr199. Residues Ser245 to His280 are hinge. The segment at Glu281–Val565 is thymidylate synthase. Arg302 serves as a coordination point for dUMP. Cys447 is a catalytic residue. Residues His448, Gln466–Asp470, Asn478, and His508–Tyr510 each bind dUMP.

This sequence in the N-terminal section; belongs to the dihydrofolate reductase family. In the C-terminal section; belongs to the thymidylate synthase family. As to quaternary structure, heterodimer or homodimer.

The enzyme catalyses (6S)-5,6,7,8-tetrahydrofolate + NADP(+) = 7,8-dihydrofolate + NADPH + H(+). It carries out the reaction dUMP + (6R)-5,10-methylene-5,6,7,8-tetrahydrofolate = 7,8-dihydrofolate + dTMP. It functions in the pathway cofactor biosynthesis; tetrahydrofolate biosynthesis; 5,6,7,8-tetrahydrofolate from 7,8-dihydrofolate: step 1/1. Its function is as follows. Bifunctional enzyme. Involved in de novo dTMP biosynthesis. Key enzyme in folate metabolism. Can play two different roles depending on the source of dihydrofolate: de novo synthesis of tetrahydrofolate or recycling of the dihydrofolate released as one of the end products of the TS catalyzed reaction. Catalyzes an essential reaction for de novo glycine and purine synthesis, DNA precursor synthesis, and for the conversion of dUMP to dTMP. The protein is Bifunctional dihydrofolate reductase-thymidylate synthase 2 (THY-2) of Arabidopsis thaliana (Mouse-ear cress).